We begin with the raw amino-acid sequence, 298 residues long: MEDRYGREIRSFRLSITPKCNLKCFYCHKEGRNEEHGKLMSADEIGKIVKSSLEFGVRKIKISGGEPLLRTDLPEIIENIKDEQIKDISLTTNGILLEKYAQKLKDAGLDRVNVSLDTLNPEQYKKITVGGNIESVKKGIEKAIEVGLTPLKVNFLAMDCTVNQLPAIMDYCRKIGAILQIIEFIPMEPELKHHHIDVVPIEEEIAKSADQVFTRKFMQNRKKYLIDGLEVEFVRPMDNTEFCEHCTRIRLTYDGYLKPCLLRDDNLVDVVNPVRNGEDTRKYFIKCIEEREPFCKAQ.

Residues 4 to 227 (RYGREIRSFR…MQNRKKYLID (224 aa)) enclose the Radical SAM core domain. Arg13 provides a ligand contact to GTP. [4Fe-4S] cluster is bound by residues Cys20 and Cys24. Position 26 (Tyr26) interacts with S-adenosyl-L-methionine. Cys27 is a binding site for [4Fe-4S] cluster. Lys61 contacts GTP. Gly65 is a binding site for S-adenosyl-L-methionine. A GTP-binding site is contributed by Thr91. Position 115 (Ser115) interacts with S-adenosyl-L-methionine. Residue Lys152 participates in GTP binding. Residues Cys243 and Cys246 each coordinate [4Fe-4S] cluster. 248 to 250 (RIR) lines the GTP pocket. Cys260 is a [4Fe-4S] cluster binding site.

Belongs to the radical SAM superfamily. MoaA family. [4Fe-4S] cluster is required as a cofactor.

It carries out the reaction GTP + AH2 + S-adenosyl-L-methionine = (8S)-3',8-cyclo-7,8-dihydroguanosine 5'-triphosphate + 5'-deoxyadenosine + L-methionine + A + H(+). Its pathway is cofactor biosynthesis; molybdopterin biosynthesis. Functionally, catalyzes the cyclization of GTP to (8S)-3',8-cyclo-7,8-dihydroguanosine 5'-triphosphate. The chain is Probable GTP 3',8-cyclase from Methanococcus maripaludis (strain C5 / ATCC BAA-1333).